A 365-amino-acid polypeptide reads, in one-letter code: 3-dehydroquinate synthase (365 aa).

NAD(+) contacts are provided by residues 72-77, 130-131, lysine 142, and lysine 151; these read SGEKEK and TT. Positions 184, 247, and 264 each coordinate Zn(2+).

It belongs to the sugar phosphate cyclases superfamily. Dehydroquinate synthase family. The cofactor is Co(2+). Requires Zn(2+) as cofactor. NAD(+) is required as a cofactor.

Its subcellular location is the cytoplasm. The catalysed reaction is 7-phospho-2-dehydro-3-deoxy-D-arabino-heptonate = 3-dehydroquinate + phosphate. It functions in the pathway metabolic intermediate biosynthesis; chorismate biosynthesis; chorismate from D-erythrose 4-phosphate and phosphoenolpyruvate: step 2/7. Its function is as follows. Catalyzes the conversion of 3-deoxy-D-arabino-heptulosonate 7-phosphate (DAHP) to dehydroquinate (DHQ). The chain is 3-dehydroquinate synthase from Bacillus cereus (strain AH187).